A 177-amino-acid polypeptide reads, in one-letter code: 3-hydroxyanthranilate 3,4-dioxygenase (177 aa).

Arg47 serves as a coordination point for O2. Residues His51, Glu57, and His95 each contribute to the Fe cation site. Glu57 contacts substrate. The substrate site is built by Arg99 and Glu110. Fe cation contacts are provided by Cys125, Cys128, Cys162, and Cys165.

This sequence belongs to the 3-HAO family. As to quaternary structure, homodimer. Requires Fe(2+) as cofactor.

It catalyses the reaction 3-hydroxyanthranilate + O2 = (2Z,4Z)-2-amino-3-carboxymuconate 6-semialdehyde. It functions in the pathway cofactor biosynthesis; NAD(+) biosynthesis; quinolinate from L-kynurenine: step 3/3. Catalyzes the oxidative ring opening of 3-hydroxyanthranilate to 2-amino-3-carboxymuconate semialdehyde, which spontaneously cyclizes to quinolinate. This is 3-hydroxyanthranilate 3,4-dioxygenase from Burkholderia cenocepacia (strain ATCC BAA-245 / DSM 16553 / LMG 16656 / NCTC 13227 / J2315 / CF5610) (Burkholderia cepacia (strain J2315)).